The following is a 428-amino-acid chain: Immunoglobulin superfamily containing leucine-rich repeat protein (428 aa).

The first 18 residues, 1–18 (MQELHLLWWALLLGLAQA), serve as a signal peptide directing secretion. Positions 19–50 (CPEPCDCGEKYGFQIADCAYRDLESVPPGFPA) constitute an LRRNT domain. N-linked (GlcNAc...) asparagine glycosylation is present at Asn-51. LRR repeat units follow at residues 51–72 (NVTT…AFRE), 75–96 (LLQS…ALAS), 99–122 (HLKS…HNLS), 123–144 (ALQL…AFRS), and 147–168 (ALRS…TFTP). The LRRCT domain occupies 180–231 (NPFDCTCGIVWLKTWALTTAVSIPEQDNIACTSPHVLKGTPLSRLPPLPCSA). One can recognise an Ig-like domain in the interval 232–343 (PSVQLSYQPS…GSAESSVDVA (112 aa)). Residues Cys-257 and Cys-327 are joined by a disulfide bond. N-linked (GlcNAc...) asparagine glycosylation is present at Asn-309.

In terms of tissue distribution, expressed in various tissues including retina, heart, skeletal muscle, prostate, ovary, small intestine, thyroid, adrenal cortex, testis, stomach and spinal cord.

The protein localises to the secreted. This is Immunoglobulin superfamily containing leucine-rich repeat protein (ISLR) from Homo sapiens (Human).